The following is a 396-amino-acid chain: Putative pyridoxal phosphate-dependent acyltransferase (396 aa).

111–112 (GF) contributes to the pyridoxal 5'-phosphate binding site. H136 serves as a coordination point for substrate. Pyridoxal 5'-phosphate contacts are provided by residues S186, 211 to 214 (DDAH), and 241 to 244 (TLSK). Residue K244 is modified to N6-(pyridoxal phosphate)lysine. T358 is a substrate binding site.

This sequence belongs to the class-II pyridoxal-phosphate-dependent aminotransferase family. In terms of assembly, homodimer. Requires pyridoxal 5'-phosphate as cofactor.

This Bacillus anthracis protein is Putative pyridoxal phosphate-dependent acyltransferase.